A 314-amino-acid chain; its full sequence is MAKGIMLHEVGEQVDQYFLIKSSTKGIASNGKPFLTLMLQDQSGDIEAKLWDAKPTDETTYAAQTIVKVIGDVHHYRGRNQLKLRNIRPAGENENVSIDDFLETAPIPKNEMMETVTQYIFEMKNPNIQRITRHLVKKYAAEFMDYPAAAKNHHEFVSGLAYHVVSMLNLAKAIADLYPSLDRDLLYAGVILHDLGKVKELSGPVSTTYTVEGNLLGHISIMVTELSKAAEELQIDAEEVLILKHLILSHHGKAEWGSPKPPMVKEAEILHYIDNLDAKMIMMDRALERVKPGEYTERVFALENRSFYKPTFHQ.

Residues 163–279 (HVVSMLNLAK…LHYIDNLDAK (117 aa)) enclose the HD domain.

The protein belongs to the YhaM family.

In terms of biological role, shows a 3'-5' exoribonuclease activity. This is 3'-5' exoribonuclease YhaM from Bacillus velezensis (strain DSM 23117 / BGSC 10A6 / LMG 26770 / FZB42) (Bacillus amyloliquefaciens subsp. plantarum).